The sequence spans 224 residues: Small ribosomal subunit protein uS5 (224 aa).

A disordered region spans residues 1-40 (MAEQPAGGQGAGDSRDSRGDRDSRGRRGDGGRGGRDRDGD). Residues 13-40 (DSRDSRGDRDSRGRRGDGGRGGRDRDGD) show a composition bias toward basic and acidic residues. The 64-residue stretch at 44–107 (YLERVVAINR…EEARKGFFRV (64 aa)) folds into the S5 DRBM domain.

It belongs to the universal ribosomal protein uS5 family. In terms of assembly, part of the 30S ribosomal subunit. Contacts proteins S4 and S8.

With S4 and S12 plays an important role in translational accuracy. In terms of biological role, located at the back of the 30S subunit body where it stabilizes the conformation of the head with respect to the body. The sequence is that of Small ribosomal subunit protein uS5 from Mycolicibacterium paratuberculosis (strain ATCC BAA-968 / K-10) (Mycobacterium paratuberculosis).